Here is a 344-residue protein sequence, read N- to C-terminus: Phosphoribosylformylglycinamidine cyclo-ligase (344 aa).

This sequence belongs to the AIR synthase family.

Its subcellular location is the cytoplasm. It carries out the reaction 2-formamido-N(1)-(5-O-phospho-beta-D-ribosyl)acetamidine + ATP = 5-amino-1-(5-phospho-beta-D-ribosyl)imidazole + ADP + phosphate + H(+). The protein operates within purine metabolism; IMP biosynthesis via de novo pathway; 5-amino-1-(5-phospho-D-ribosyl)imidazole from N(2)-formyl-N(1)-(5-phospho-D-ribosyl)glycinamide: step 2/2. The sequence is that of Phosphoribosylformylglycinamidine cyclo-ligase from Neisseria meningitidis serogroup B (strain ATCC BAA-335 / MC58).